Consider the following 140-residue polypeptide: Large ribosomal subunit protein uL11 (140 aa).

It belongs to the universal ribosomal protein uL11 family. In terms of assembly, part of the ribosomal stalk of the 50S ribosomal subunit. Interacts with L10 and the large rRNA to form the base of the stalk. L10 forms an elongated spine to which L12 dimers bind in a sequential fashion forming a multimeric L10(L12)X complex. One or more lysine residues are methylated.

In terms of biological role, forms part of the ribosomal stalk which helps the ribosome interact with GTP-bound translation factors. The protein is Large ribosomal subunit protein uL11 of Solidesulfovibrio magneticus (strain ATCC 700980 / DSM 13731 / RS-1) (Desulfovibrio magneticus).